Reading from the N-terminus, the 224-residue chain is Putative adhesin A1C_06425 (224 aa).

A signal peptide spans 1–22; the sequence is MKKLLLIATTSATILSSSISFA.

This chain is Putative adhesin A1C_06425, found in Rickettsia akari (strain Hartford).